A 182-amino-acid chain; its full sequence is Putative manganese efflux pump MntP (182 aa).

The next 6 membrane-spanning stretches (helical) occupy residues 6-26 (LIPL…VSLG), 37-57 (ILYI…IGMV), 72-92 (FAGA…SILE), 101-121 (IGIS…SVGL), 131-151 (IITI…GLLL), and 162-182 (YGEI…LFPI).

This sequence belongs to the MntP (TC 9.B.29) family.

The protein localises to the cell membrane. Its function is as follows. Probably functions as a manganese efflux pump. This Bacillus mycoides (strain KBAB4) (Bacillus weihenstephanensis) protein is Putative manganese efflux pump MntP.